Reading from the N-terminus, the 241-residue chain is Methylthioribulose-1-phosphate dehydratase (241 aa).

The span at 1–12 shows a compositional bias: basic and acidic residues; it reads MSQEITQKDNND. Residues 1-22 are disordered; sequence MSQEITQKDNNDHLVQSSDPDH. Substrate is bound at residue Cys-101. Zn(2+)-binding residues include His-118 and His-120. Glu-147 serves as the catalytic Proton donor/acceptor. His-203 provides a ligand contact to Zn(2+).

Belongs to the aldolase class II family. MtnB subfamily. The cofactor is Zn(2+).

The protein resides in the cytoplasm. It catalyses the reaction 5-(methylsulfanyl)-D-ribulose 1-phosphate = 5-methylsulfanyl-2,3-dioxopentyl phosphate + H2O. Its pathway is amino-acid biosynthesis; L-methionine biosynthesis via salvage pathway; L-methionine from S-methyl-5-thio-alpha-D-ribose 1-phosphate: step 2/6. In terms of biological role, catalyzes the dehydration of methylthioribulose-1-phosphate (MTRu-1-P) into 2,3-diketo-5-methylthiopentyl-1-phosphate (DK-MTP-1-P). The polypeptide is Methylthioribulose-1-phosphate dehydratase (Aspergillus terreus (strain NIH 2624 / FGSC A1156)).